Reading from the N-terminus, the 219-residue chain is Translation initiation factor IF-3 (219 aa).

It belongs to the IF-3 family. In terms of assembly, monomer.

It localises to the cytoplasm. Its function is as follows. IF-3 binds to the 30S ribosomal subunit and shifts the equilibrium between 70S ribosomes and their 50S and 30S subunits in favor of the free subunits, thus enhancing the availability of 30S subunits on which protein synthesis initiation begins. The chain is Translation initiation factor IF-3 from Prochlorococcus marinus (strain MIT 9303).